A 151-amino-acid polypeptide reads, in one-letter code: 3-dehydroquinate dehydratase (151 aa).

The active-site Proton acceptor is tyrosine 26. Asparagine 77, histidine 83, and aspartate 90 together coordinate substrate. The active-site Proton donor is the histidine 103. Substrate contacts are provided by residues 104-105 and arginine 114; that span reads LS.

Belongs to the type-II 3-dehydroquinase family. Homododecamer.

It catalyses the reaction 3-dehydroquinate = 3-dehydroshikimate + H2O. It functions in the pathway metabolic intermediate biosynthesis; chorismate biosynthesis; chorismate from D-erythrose 4-phosphate and phosphoenolpyruvate: step 3/7. Its function is as follows. Catalyzes a trans-dehydration via an enolate intermediate. The protein is 3-dehydroquinate dehydratase of Pelodictyon phaeoclathratiforme (strain DSM 5477 / BU-1).